The chain runs to 121 residues: Small ribosomal subunit protein uS13 (121 aa).

A disordered region spans residues 94–121 (GLPVRGQRTRTNSRTRKGPKKGAAALKK).

This sequence belongs to the universal ribosomal protein uS13 family. Part of the 30S ribosomal subunit. Forms a loose heterodimer with protein S19. Forms two bridges to the 50S subunit in the 70S ribosome.

Located at the top of the head of the 30S subunit, it contacts several helices of the 16S rRNA. In the 70S ribosome it contacts the 23S rRNA (bridge B1a) and protein L5 of the 50S subunit (bridge B1b), connecting the 2 subunits; these bridges are implicated in subunit movement. Contacts the tRNAs in the A and P-sites. The protein is Small ribosomal subunit protein uS13 of Leptothrix cholodnii (strain ATCC 51168 / LMG 8142 / SP-6) (Leptothrix discophora (strain SP-6)).